The following is a 49-amino-acid chain: Sperm protamine P1 (49 aa).

Belongs to the protamine P1 family. Testis.

The protein localises to the nucleus. The protein resides in the chromosome. Its function is as follows. Protamines substitute for histones in the chromatin of sperm during the haploid phase of spermatogenesis. They compact sperm DNA into a highly condensed, stable and inactive complex. The protein is Sperm protamine P1 (PRM1) of Pteropus hypomelanus (Island flying fox).